We begin with the raw amino-acid sequence, 92 residues long: Precursor of elicitor peptide 1 (92 aa).

A propeptide spanning residues 1–69 is cleaved from the precursor; it reads MEKSDRRSEE…EKEEVVVTSR (69 aa). Positions 35–92 are disordered; sequence HQDSPTTSSPGTSKQPKEEKEDVTMEKEEVVVTSRATKVKAKQRGKEKVSSGRPGQHN. Polar residues predominate over residues 37 to 48; it reads DSPTTSSPGTSK. Positions 49 to 64 are enriched in basic and acidic residues; it reads QPKEEKEDVTMEKEEV.

Belongs to the brassicaceae elicitor peptide family. In terms of assembly, interacts with its receptor PEPR1.

Elicitor of plant defense. Induces the production of plant defensin (PDF1.2) and of H(2)O(2). Promotes resistance to the root fungal pathogen P.irregulare. Triggers the expression of several PROSCOOP genes (e.g. PROSCOOP2, PROSCOOP7, PROSCOOP8, PROSCOOP12 and PROSCOOP13). The chain is Precursor of elicitor peptide 1 from Arabidopsis thaliana (Mouse-ear cress).